A 738-amino-acid polypeptide reads, in one-letter code: MEHKRNNILLAGLFFLLLGLVSIARAQIPQWEKCGAFVEPASEELLDPEPRGPVNVEADRVESEKNGVSVFSGEVKFRRRGQWLDADEVLYDKPNDTVEAFGDVRYQDATMDVISDSAKVNLEADIGEAENARYFLRDYHARGEAGAVEREGSVKTELRDATFTTCDIGDNAWQLKADRVSLDHKEGVGWARGARLRLWDTTVFYVPFLRFPIDNRRKSGFLVPSGGSSSNSGIGISTPYYWNIAPNMDATITPRYLSDRGPMMEGEVRYLNPSNFGRIRGSFLPHDAKRDDYRGAFSYRHSGSPRPRWFTNLDLNLVSDDRYFEDFGNSLSIASTTVLNNSLDIGYQGNGWNALGRFQGFQTIDRSIPAFARPYQRLPQFLVDGFFPDRFLGLDVDFHGEVVRFDRDAAPPTGGVRLDFWPTVSLPFRTPGTFFTPSIGVRDTRYFLEDAPPGTDSTLSRTLPIVSMDTGAIFERSLTLWGSDLRQTLEPRAYYLYVPFEDQSAFPVFDSAPLDFYFSRLFQPNRFTGADRLNDANQLTLAVTTRLLQSDTGAELLRASIGQIQFFRDRRVTMPGAAKETDSSSLVIAEVAARLAREWSLRGELRFDPHKKQTDLGAAELHYRGDEGGLLNINYRFRRNFLEQLNVSGRYPIADNWSVVGRWYQSIADGRLLELLGGVEYDSCCWAIRLVGRSYITNIEGDRNNSVLVQLELKGLGNLGQNVERLLERSVLGYGQPF.

Positions 1-26 (MEHKRNNILLAGLFFLLLGLVSIARA) are cleaved as a signal peptide.

The protein belongs to the LptD family. As to quaternary structure, component of the lipopolysaccharide transport and assembly complex. Interacts with LptE and LptA.

Its subcellular location is the cell outer membrane. Functionally, together with LptE, is involved in the assembly of lipopolysaccharide (LPS) at the surface of the outer membrane. The sequence is that of LPS-assembly protein LptD from Nitrosococcus oceani (strain ATCC 19707 / BCRC 17464 / JCM 30415 / NCIMB 11848 / C-107).